A 102-amino-acid chain; its full sequence is Glycoprotein 24A (102 aa).

It belongs to the csb family. Post-translationally, O-glycosylated.

It localises to the cell surface. Its function is as follows. Cell-cell adhesion during early development. This is Glycoprotein 24A (csbA) from Dictyostelium discoideum (Social amoeba).